Consider the following 525-residue polypeptide: GMP synthase [glutamine-hydrolyzing] (525 aa).

Residues 9 to 207 form the Glutamine amidotransferase type-1 domain; the sequence is RILILDFGSQ…VRDICQCEAL (199 aa). Catalysis depends on Cys86, which acts as the Nucleophile. Residues His181 and Glu183 contribute to the active site. A GMPS ATP-PPase domain is found at 208–400; sequence WTPAKIIDDA…LGLPYDMLYR (193 aa). 235-241 lines the ATP pocket; the sequence is SGGVDSS.

Homodimer.

The enzyme catalyses XMP + L-glutamine + ATP + H2O = GMP + L-glutamate + AMP + diphosphate + 2 H(+). The protein operates within purine metabolism; GMP biosynthesis; GMP from XMP (L-Gln route): step 1/1. In terms of biological role, catalyzes the synthesis of GMP from XMP. The sequence is that of GMP synthase [glutamine-hydrolyzing] from Escherichia coli O17:K52:H18 (strain UMN026 / ExPEC).